Consider the following 139-residue polypeptide: Holo-[acyl-carrier-protein] synthase (139 aa).

Mg(2+)-binding residues include Asp8 and Glu57.

The protein belongs to the P-Pant transferase superfamily. AcpS family. The cofactor is Mg(2+).

The protein resides in the cytoplasm. The enzyme catalyses apo-[ACP] + CoA = holo-[ACP] + adenosine 3',5'-bisphosphate + H(+). Transfers the 4'-phosphopantetheine moiety from coenzyme A to a Ser of acyl-carrier-protein. This Dinoroseobacter shibae (strain DSM 16493 / NCIMB 14021 / DFL 12) protein is Holo-[acyl-carrier-protein] synthase.